The primary structure comprises 189 residues: MyoD family inhibitor domain-containing protein 2 (189 aa).

Positions 28 to 188 (KEDTQLTNAK…LAMEISEICY (161 aa)) constitute an MDFI domain.

This sequence belongs to the MDFI family.

In Homo sapiens (Human), this protein is MyoD family inhibitor domain-containing protein 2.